A 492-amino-acid chain; its full sequence is Cytoplasmic dynein 1 light intermediate chain 2 (492 aa).

61–68 (GEDGSGKT) contributes to the ATP binding site. Disordered stretches follow at residues 187-206 (PEEG…SGSD), 371-423 (AKQP…KNNA), and 437-492 (LSKK…ENEA). Serine 194 bears the Phosphoserine mark. The segment covering 371–381 (AKQPATPTRAS) has biased composition (polar residues). 2 positions are modified to phosphoserine: serine 383 and serine 391. Arginine 397 is subject to Omega-N-methylarginine. The residue at position 441 (threonine 441) is a Phosphothreonine. Residues serine 443 and serine 446 each carry the phosphoserine modification. Positions 452-469 (VQSTAKKSGQKTVLSNVQ) are enriched in polar residues. The segment covering 471–480 (ELDRMTRKPD) has biased composition (basic and acidic residues). Residues 482–492 (MVTNSSTENEA) show a composition bias toward polar residues.

The protein belongs to the dynein light intermediate chain family. Homodimer. The cytoplasmic dynein 1 complex consists of two catalytic heavy chains (HCs) and a number of non-catalytic subunits presented by intermediate chains (ICs), light intermediate chains (LICs) and light chains (LCs); the composition seems to vary in respect to the IC, LIC and LC composition. The heavy chain homodimer serves as a scaffold for the probable homodimeric assembly of the respective non-catalytic subunits. The ICs and LICs bind directly to the HC dimer and the LCs assemble on the IC dimer. Interacts with DYNC1H1; DYNC1LI1 and DYNC1LI2 bind mutually exclusive to DYNC1H.

It is found in the cytoplasm. It localises to the cytoskeleton. Its function is as follows. Acts as one of several non-catalytic accessory components of the cytoplasmic dynein 1 complex that are thought to be involved in linking dynein to cargos and to adapter proteins that regulate dynein function. Cytoplasmic dynein 1 acts as a motor for the intracellular retrograde motility of vesicles and organelles along microtubules. May play a role in binding dynein to membranous organelles or chromosomes. In Pongo abelii (Sumatran orangutan), this protein is Cytoplasmic dynein 1 light intermediate chain 2 (DYNC1LI2).